The sequence spans 23 residues: Brevinin-1Eb (23 aa).

The cysteines at positions 17 and 23 are disulfide-linked.

This sequence belongs to the frog skin active peptide (FSAP) family. Brevinin subfamily. As to expression, expressed by the skin glands.

The protein resides in the secreted. Its function is as follows. Shows antibacterial activity against representative Gram-negative and Gram-positive bacterial species, and a very high hemolytic activity. This Pelophylax lessonae (Pool frog) protein is Brevinin-1Eb.